We begin with the raw amino-acid sequence, 342 residues long: Phenylalanine--tRNA ligase alpha subunit (342 aa).

Mg(2+) is bound at residue E257.

The protein belongs to the class-II aminoacyl-tRNA synthetase family. Phe-tRNA synthetase alpha subunit type 1 subfamily. In terms of assembly, tetramer of two alpha and two beta subunits. Mg(2+) serves as cofactor.

The protein resides in the cytoplasm. The catalysed reaction is tRNA(Phe) + L-phenylalanine + ATP = L-phenylalanyl-tRNA(Phe) + AMP + diphosphate + H(+). This chain is Phenylalanine--tRNA ligase alpha subunit, found in Legionella pneumophila subsp. pneumophila (strain Philadelphia 1 / ATCC 33152 / DSM 7513).